Consider the following 1223-residue polypeptide: Rho family-interacting cell polarization regulator 1 (1223 aa).

Residue Ser-22 is modified to Phosphoserine. A coiled-coil region spans residues 83–112; the sequence is RGLTAYLEVHQQEQEKLQRQIKESKRNSRL. Phosphoserine occurs at positions 345 and 347. Position 351 is a phosphothreonine (Thr-351). Residues 371 to 411 form a disordered region; the sequence is NGTAWSLSSESSDDSSSPQLSGTARHSTPKPLVQQPEPLPV. 2 stretches are compositionally biased toward low complexity: residues 376–391 and 399–411; these read SLSSESSDDSSSPQLS and PKPLVQQPEPLPV. Phosphoserine is present on residues Ser-451, Ser-454, and Ser-468. Composition is skewed to low complexity over residues 566–586 and 595–655; these read TTIGSAHTTTPSPLTSTGSVP and TPSP…TSPT. Disordered regions lie at residues 566 to 771 and 856 to 887; these read TTIG…QHSE and FLNDDEDEDNDGPGDRHTSSPEVVAEDRLDSS. Polar residues predominate over residues 656 to 665; that stretch reads QEAKMSTHTT. The segment covering 673 to 688 has biased composition (low complexity); the sequence is TTTSPISTTESPSPST. Composition is skewed to polar residues over residues 693 to 703 and 725 to 741; these read ISSSSAESTGP and ASCTSYQSLASSGSKPL. Residue Ser-748 is modified to Phosphoserine. The segment covering 748-767 has biased composition (low complexity); the sequence is SPEQIPKSPSSSPSSSAPEP. Residues 858–867 show a composition bias toward acidic residues; sequence NDDEDEDNDG. The segment covering 868-885 has biased composition (basic and acidic residues); that stretch reads PGDRHTSSPEVVAEDRLD. Phosphoserine occurs at positions 874 and 875.

Belongs to the RIPOR family. As to quaternary structure, interacts (via N-terminus) with RHOA (GTP-bound form); this interaction links active RHOA to STK24 and STK26 kinases. Interacts with RHOB. Interacts with RHOC. Interacts (via C-terminus) with PDCD10; this interaction occurs in a Rho-independent manner. Interacts (via C-terminus) with STK24; this interaction occurs in a PDCD10-dependent and Rho-independent manner. Interacts (via C-terminus) with STK26; this interaction occurs in a PDCD10-dependent and Rho-independent manner. Interacts (via N-terminus) with 14-3-3 proteins; these interactions occur in a Rho-dependent manner. As to expression, expressed in the kidney exclusively by glomerular podocytes.

Its subcellular location is the cytoplasm. It localises to the golgi apparatus. In terms of biological role, downstream effector protein for Rho-type small GTPases that plays a role in cell polarity and directional migration. Acts as an adapter protein, linking active Rho proteins to STK24 and STK26 kinases, and hence positively regulates Golgi reorientation in polarized cell migration upon Rho activation. Involved in the subcellular relocation of STK26 from the Golgi to cytoplasm punctae in a Rho- and PDCD10-dependent manner upon serum stimulation. The sequence is that of Rho family-interacting cell polarization regulator 1 from Mus musculus (Mouse).